We begin with the raw amino-acid sequence, 245 residues long: rRNA adenine N-6-methyltransferase (245 aa).

6 residues coordinate S-adenosyl-L-methionine: asparagine 10, leucine 12, glycine 37, glutamate 58, aspartate 83, and serine 100.

The protein belongs to the class I-like SAM-binding methyltransferase superfamily. rRNA adenine N(6)-methyltransferase family.

It carries out the reaction adenosine(2085) in 23S rRNA + 2 S-adenosyl-L-methionine = N(6)-dimethyladenosine(2085) in 23S rRNA + 2 S-adenosyl-L-homocysteine + 2 H(+). In terms of biological role, this protein produces a dimethylation of the adenine residue at position 2085 in 23S rRNA, resulting in reduced affinity between ribosomes and macrolide-lincosamide-streptogramin B antibiotics. The protein is rRNA adenine N-6-methyltransferase of Streptococcus sanguinis.